The primary structure comprises 319 residues: D-alanine--D-alanine ligase (319 aa).

The region spanning Lys109–Gln313 is the ATP-grasp domain. Pro139–Thr194 contributes to the ATP binding site. The Mg(2+) site is built by Asp266, Glu280, and Asn282.

Belongs to the D-alanine--D-alanine ligase family. Requires Mg(2+) as cofactor. Mn(2+) is required as a cofactor.

The protein localises to the cytoplasm. It carries out the reaction 2 D-alanine + ATP = D-alanyl-D-alanine + ADP + phosphate + H(+). The protein operates within cell wall biogenesis; peptidoglycan biosynthesis. Cell wall formation. The protein is D-alanine--D-alanine ligase of Methylibium petroleiphilum (strain ATCC BAA-1232 / LMG 22953 / PM1).